We begin with the raw amino-acid sequence, 417 residues long: Serine hydroxymethyltransferase (417 aa).

Residues L120 and 124 to 126 (GHL) contribute to the (6S)-5,6,7,8-tetrahydrofolate site. N6-(pyridoxal phosphate)lysine is present on K229.

This sequence belongs to the SHMT family. As to quaternary structure, homodimer. It depends on pyridoxal 5'-phosphate as a cofactor.

The protein resides in the cytoplasm. The enzyme catalyses (6R)-5,10-methylene-5,6,7,8-tetrahydrofolate + glycine + H2O = (6S)-5,6,7,8-tetrahydrofolate + L-serine. It participates in one-carbon metabolism; tetrahydrofolate interconversion. It functions in the pathway amino-acid biosynthesis; glycine biosynthesis; glycine from L-serine: step 1/1. In terms of biological role, catalyzes the reversible interconversion of serine and glycine with tetrahydrofolate (THF) serving as the one-carbon carrier. This reaction serves as the major source of one-carbon groups required for the biosynthesis of purines, thymidylate, methionine, and other important biomolecules. Also exhibits THF-independent aldolase activity toward beta-hydroxyamino acids, producing glycine and aldehydes, via a retro-aldol mechanism. The chain is Serine hydroxymethyltransferase from Anaeromyxobacter sp. (strain K).